The following is an 842-amino-acid chain: Outer membrane usher protein LpfC (842 aa).

Residues 1-21 (MTWTHLPLGNKTSRFTQSALA) form the signal peptide. An intrachain disulfide couples Cys-819 to Cys-841.

This sequence belongs to the fimbrial export usher family.

Its subcellular location is the cell outer membrane. Involved in the export and assembly of LpfA fimbrial subunits across the outer membrane. The protein is Outer membrane usher protein LpfC (lpfC) of Salmonella typhimurium (strain LT2 / SGSC1412 / ATCC 700720).